The chain runs to 97 residues: uncharacterized protein (97 aa).

Ser2 carries the post-translational modification N-acetylserine.

This is an uncharacterized protein from Mycobacterium tuberculosis (strain ATCC 25618 / H37Rv).